Reading from the N-terminus, the 581-residue chain is DNA polymerase alpha subunit B (581 aa).

It belongs to the DNA polymerase alpha subunit B family. In terms of assembly, DNA polymerase alpha:primase is a four subunit enzyme complex, which is assembled throughout the cell cycle, and consists of the two DNA polymerase subunits A and B, and the DNA primase large and small subunits. Subunit B binds to subunit A.

It localises to the nucleus. Its function is as follows. May play an essential role at the early stage of chromosomal DNA replication by coupling the polymerase alpha/primase complex to the cellular replication machinery. Required for the distribution of pie-1 in cell divsion. The sequence is that of DNA polymerase alpha subunit B (div-1) from Caenorhabditis elegans.